A 382-amino-acid chain; its full sequence is MDGNSTHPAPNLKTTMAWSRISNQLGHWNDRKVIAIPLSDFLNTHPDIQSGIIAEFKKATGEEGMFARDPESLGIMLLGPVKLFKPDSVVVDGNLFWDPKGIHASAPKEQQKKAKIPRPPNAYILYRKDHHREIREQNPGLHNNEISVIVGNMWRDEQPHIREKYFNMSNEIKTRLLLENPDYRYNPRRSQDIRRRVSPYLKIKLLNYDVNGNLLWGTVNAEDAALIRTHFHGVVRVEEMDDGCRIVCRPVAGSRKLRAAVVDTWMPRYTVDTTPVTEDDDAQAFNFNDPLGGAYFPLNEHLWITVNQNPPFNAPPPNPNPHLDFVHPDGMEAVVHNVQNMIAQVQEANEAAALTLPPPPPLRLLSLRLWLMIPLTQLSFPL.

The HMG box DNA-binding region spans 116–184 (IPRPPNAYIL…RLLLENPDYR (69 aa)).

Binds in vitro to DNA containing a specific core sequence 5'-CTTTG-3'.

Its subcellular location is the nucleus. Its function is as follows. Mating type proteins are sequence specific DNA-binding proteins that act as master switches in yeast differentiation by controlling gene expression in a cell type-specific fashion. Transcriptional activator that induces the transcription of a-specific genes like mating factor mfa-1. Required for mating as an a-cell, blocking of heterokaryon formation (vegetative incompatibility) and for perithecium induction. The chain is Mating-type protein a-1 (mta-1) from Neurospora crassa.